Consider the following 106-residue polypeptide: Nucleoid-associated protein DP1429 (106 aa).

It belongs to the YbaB/EbfC family. In terms of assembly, homodimer.

It is found in the cytoplasm. The protein localises to the nucleoid. In terms of biological role, binds to DNA and alters its conformation. May be involved in regulation of gene expression, nucleoid organization and DNA protection. The chain is Nucleoid-associated protein DP1429 from Desulfotalea psychrophila (strain LSv54 / DSM 12343).